The chain runs to 70 residues: Small ribosomal subunit protein bS21 (70 aa).

A disordered region spans residues Glu-39–Tyr-70. The segment covering Arg-45–Arg-61 has biased composition (basic residues).

The protein belongs to the bacterial ribosomal protein bS21 family.

The sequence is that of Small ribosomal subunit protein bS21 from Ralstonia nicotianae (strain ATCC BAA-1114 / GMI1000) (Ralstonia solanacearum).